Here is a 503-residue protein sequence, read N- to C-terminus: Adenosine deaminase 2-A (503 aa).

The first 24 residues, 1 to 24 (MHVLFLGDLMWIYLLLLCCASCNG), serve as a signal peptide directing secretion. Zn(2+) contacts are provided by His-105 and His-107. Asp-108 provides a ligand contact to substrate. N-linked (GlcNAc...) asparagine glycosylation occurs at Asn-120. An intrachain disulfide couples Cys-130 to Cys-152. Residues Asn-167 and Asn-178 are each glycosylated (N-linked (GlcNAc...) asparagine). Substrate is bound by residues 197 to 204 (WERFEQVF) and His-286. A glycan (N-linked (GlcNAc...) asparagine) is linked at Asn-290. Gly-319 lines the substrate pocket. His-349 contacts Zn(2+). The active-site Proton donor is the Glu-352. Residue Asn-371 is glycosylated (N-linked (GlcNAc...) asparagine). His-377 serves as the catalytic Proton acceptor. Asp-434 contacts Zn(2+). Substrate is bound at residue Asp-435.

The protein belongs to the metallo-dependent hydrolases superfamily. Adenosine and AMP deaminases family. ADGF subfamily. Zn(2+) is required as a cofactor.

The protein localises to the secreted. The catalysed reaction is adenosine + H2O + H(+) = inosine + NH4(+). Adenosine deaminase that may contribute to the degradation of extracellular adenosine, a signaling molecule that controls a variety of cellular responses. May play a role in the regulation of cell proliferation. This chain is Adenosine deaminase 2-A, found in Danio rerio (Zebrafish).